The chain runs to 773 residues: Transducin-like enhancer protein 4 (773 aa).

Disordered stretches follow at residues 1-22, 140-162, and 182-357; these read MIRDLSKMYPQTRHPAPHQPAQ, HGHGLPVPLTPHPSGLQPPAIPP, and LPIK…DPLA. Positions 1–136 are q domain; it reads MIRDLSKMYP…AIIGQQLQAQ (136 aa). Positions 137 to 204 are GP domain; it reads HLSHGHGLPV…HQRDRDSIKS (68 aa). Basic and acidic residues predominate over residues 183–202; it reads PIKDEKKHHDNDHQRDRDSI. Over residues 203–214 the composition is skewed to low complexity; that stretch reads KSSSVSPSASFR. Residues 205–274 are ccN domain; the sequence is SSVSPSASFR…SPRGSPAHSP (70 aa). A phosphoserine mark is found at S208, S212, S216, and S222. The segment covering 215–252 has biased composition (basic and acidic residues); sequence GSEKHRNSTDYSSESKKQKTEEKEIAARYDSDGEKSDD. K237 carries the N6-acetyllysine modification. Residue S245 is modified to Phosphoserine. A Phosphoserine; by CK2 modification is found at S250. A Phosphoserine; by CDK1 modification is found at S265. Phosphoserine is present on residues S269 and S273. Residues 273–289 are compositionally biased toward basic and acidic residues; the sequence is SPRENGLDKTRLLKKDA. Residues 275–452 form an SP domain region; the sequence is RENGLDKTRL…PGGKPAYSFH (178 aa). At K281 the chain carries N6-acetyllysine. Low complexity predominate over residues 290–305; sequence PISPASVASSSSTPSS. The residue at position 292 (S292) is a Phosphoserine. Positions 317 to 328 are enriched in polar residues; that stretch reads TTPVSKSNTPTP. T318 carries the phosphothreonine modification. S321 and S323 each carry phosphoserine. T325, T327, T334, and T340 each carry phosphothreonine. S419 carries the post-translational modification Phosphoserine. WD repeat units follow at residues 485-523, 531-570, 575-614, 617-656, 658-697, 699-738, and 740-773; these read NHGEVVCAVTISNPTRHVYTGGKGCVKVWDISHPGNKSP, NRDNYIRSCRLLPDGRTLIVGGEASTLSIWDLAAPTPRIK, SSAPACYALAISPDSKVCFSCCSDGNIAVWDLHNQTLVRQ, GHTDGASCIDISNDGTKLWTGGLDNTVRSWDLREGRQLQQ, DFTSQIFSLGYCPTGEWLAVGMENSNVEVLHVTKPDKYQL, LHESCVLSLKFAHCGKWFVSTGKDNLLNAWRTPYGASIFQ, and KESSSVLSCDISVDDKYIVTGSGDKKATVYEVIY.

It belongs to the WD repeat Groucho/TLE family. In terms of assembly, homooligomer and heterooligomer with other family members. Interacts with PAX5. Interacts with LEF1, TCF7, TCF7L1 and TCF7L2. Interacts with ZNF703; TLE4 may mediate ZNF703 transcriptional repression. Interacts with SIX3 and SIX6. Interacts with PAX2. Interacts with TLE1. Phosphorylated. PAX5 binding increases phosphorylation. Post-translationally, ubiquitinated by XIAP/BIRC4. In terms of tissue distribution, expressed in bone marrow-derived macrophages.

The protein resides in the nucleus. Its function is as follows. Transcriptional corepressor that binds to a number of transcription factors. Inhibits the transcriptional activation mediated by PAX5, and by CTNNB1 and TCF family members in Wnt signaling. The effects of full-length TLE family members may be modulated by association with dominant-negative AES. Essential for the transcriptional repressor activity of SIX3 during retina and lens development and for SIX3 transcriptional auto-repression. Involved in transcriptional repression of GNRHR and enhances MSX1-mediated transcriptional repression of CGA/alpha-GSU. In Mus musculus (Mouse), this protein is Transducin-like enhancer protein 4 (Tle4).